Reading from the N-terminus, the 150-residue chain is D-aminoacyl-tRNA deacylase (150 aa).

A Gly-cisPro motif, important for rejection of L-amino acids motif is present at residues 137 to 138 (GP).

Belongs to the DTD family. In terms of assembly, homodimer.

It localises to the cytoplasm. It catalyses the reaction glycyl-tRNA(Ala) + H2O = tRNA(Ala) + glycine + H(+). The catalysed reaction is a D-aminoacyl-tRNA + H2O = a tRNA + a D-alpha-amino acid + H(+). In terms of biological role, an aminoacyl-tRNA editing enzyme that deacylates mischarged D-aminoacyl-tRNAs. Also deacylates mischarged glycyl-tRNA(Ala), protecting cells against glycine mischarging by AlaRS. Acts via tRNA-based rather than protein-based catalysis; rejects L-amino acids rather than detecting D-amino acids in the active site. By recycling D-aminoacyl-tRNA to D-amino acids and free tRNA molecules, this enzyme counteracts the toxicity associated with the formation of D-aminoacyl-tRNA entities in vivo and helps enforce protein L-homochirality. The protein is D-aminoacyl-tRNA deacylase of Heliobacterium modesticaldum (strain ATCC 51547 / Ice1).